Consider the following 620-residue polypeptide: Chaperone protein DnaK (620 aa).

A Phosphothreonine; by autocatalysis modification is found at Thr197. The disordered stretch occupies residues Ala597–Glu620.

This sequence belongs to the heat shock protein 70 family.

Its function is as follows. Acts as a chaperone. The sequence is that of Chaperone protein DnaK from Helicobacter pylori (strain G27).